The sequence spans 602 residues: RecBCD enzyme subunit RecD (602 aa).

Gly174–Thr181 contacts ATP.

The protein belongs to the RecD family. As to quaternary structure, heterotrimer of RecB, RecC and RecD. All subunits contribute to DNA-binding.

It catalyses the reaction Couples ATP hydrolysis with the unwinding of duplex DNA at the replication fork by translocating in the 5'-3' direction. This creates two antiparallel DNA single strands (ssDNA). The leading ssDNA polymer is the template for DNA polymerase III holoenzyme which synthesizes a continuous strand.. It carries out the reaction ATP + H2O = ADP + phosphate + H(+). Functionally, a helicase/nuclease that prepares dsDNA breaks (DSB) for recombinational DNA repair. Binds to DSBs and unwinds DNA via a highly rapid and processive ATP-dependent bidirectional helicase activity. Unwinds dsDNA until it encounters a Chi (crossover hotspot instigator) sequence from the 3' direction. Cuts ssDNA a few nucleotides 3' to the Chi site. The properties and activities of the enzyme are changed at Chi. The Chi-altered holoenzyme produces a long 3'-ssDNA overhang and facilitates RecA-binding to the ssDNA for homologous DNA recombination and repair. Holoenzyme degrades any linearized DNA that is unable to undergo homologous recombination. In the holoenzyme this subunit has ssDNA-dependent ATPase and 5'-3' helicase activity. When added to pre-assembled RecBC greatly stimulates nuclease activity and augments holoenzyme processivity. Negatively regulates the RecA-loading ability of RecBCD. This is RecBCD enzyme subunit RecD from Buchnera aphidicola subsp. Schizaphis graminum (strain Sg).